The primary structure comprises 444 residues: Acyl-CoA 6-desaturase (444 aa).

Residues 1 to 131 (MGKGGNQGEG…DMNLFKTNHV (131 aa)) lie on the Cytoplasmic side of the membrane. The 78-residue stretch at 18-95 (MPTFSWEEIQ…LKPLLIGELA (78 aa)) folds into the Cytochrome b5 heme-binding domain. A helical membrane pass occupies residues 132-152 (FFLLLLAHIIALESIAWFTVF). The Lumenal segment spans residues 153–157 (YFGNG). A helical membrane pass occupies residues 158-178 (WIPTLITAFVLATSQAQAGWL). The Cytoplasmic segment spans residues 179-264 (QHDYGHLSVY…KYLPYNHQHE (86 aa)). The Histidine box-1 signature appears at 180-184 (HDYGH). The Histidine box-2 motif lies at 217 to 221 (HFQHH). A helical transmembrane segment spans residues 265–285 (YFFLIGPPLLIPMYFQYQIIM). Over 286-305 (TMIVHKNWVDLAWAISYYIR) the chain is Lumenal. A helical transmembrane segment spans residues 306–326 (FFVTYIPFYGILGALLFLNFI). The Cytoplasmic portion of the chain corresponds to 327–444 (RFLESHWFVW…KLWLDAYLHK (118 aa)). A Histidine box-3 motif is present at residues 382-386 (QIEHH).

The protein belongs to the fatty acid desaturase type 1 family.

The protein localises to the endoplasmic reticulum membrane. It carries out the reaction (9Z,12Z)-octadecadienoyl-CoA + 2 Fe(II)-[cytochrome b5] + O2 + 2 H(+) = (6Z,9Z,12Z)-octadecatrienoyl-CoA + 2 Fe(III)-[cytochrome b5] + 2 H2O. It catalyses the reaction (9Z,12Z,15Z)-octadecatrienoyl-CoA + 2 Fe(II)-[cytochrome b5] + O2 + 2 H(+) = (6Z,9Z,12Z,15Z)-octadecatetraenoyl-CoA + 2 Fe(III)-[cytochrome b5] + 2 H2O. The enzyme catalyses (9Z,12Z,15Z,18Z,21Z)-tetracosapentaenoyl-CoA + 2 Fe(II)-[cytochrome b5] + O2 + 2 H(+) = (6Z,9Z,12Z,15Z,18Z,21Z)-tetracosahexaenoyl-CoA + 2 Fe(III)-[cytochrome b5] + 2 H2O. The catalysed reaction is (11E)-octadecenoyl-CoA + 2 Fe(II)-[cytochrome b5] + O2 + 2 H(+) = (6Z,11E)-octadecadienoyl-CoA + 2 Fe(III)-[cytochrome b5] + 2 H2O. It carries out the reaction (11Z,14Z)-eicosadienoyl-CoA + 2 Fe(II)-[cytochrome b5] + O2 + 2 H(+) = (8Z,11Z,14Z)-eicosatrienoyl-CoA + 2 Fe(III)-[cytochrome b5] + 2 H2O. It catalyses the reaction (11Z,14Z,17Z)-eicosatrienoyl-CoA + 2 Fe(II)-[cytochrome b5] + O2 + 2 H(+) = (8Z,11Z,14Z,17Z)-eicosatetraenoyl-CoA + 2 Fe(III)-[cytochrome b5] + 2 H2O. It functions in the pathway lipid metabolism; polyunsaturated fatty acid biosynthesis. Involved in the biosynthesis of highly unsaturated fatty acids (HUFA) from the essential polyunsaturated fatty acids (PUFA) linoleic acid (LA) (18:2n-6) and alpha-linolenic acid (ALA) (18:3n-3) precursors, acting as a fatty acyl-coenzyme A (CoA) desaturase that introduces a cis double bond at carbon 6 of the fatty acyl chain. Catalyzes the first and rate limiting step in this pathway which is the desaturation of LA (18:2n-6) and ALA (18:3n-3) into gamma-linoleate (GLA) (18:3n-6) and stearidonate (18:4n-3), respectively. Subsequently, in the biosynthetic pathway of HUFA n-3 series, it desaturates tetracosapentaenoate (24:5n-3) to tetracosahexaenoate (24:6n-3), which is then converted to docosahexaenoate (DHA)(22:6n-3), an important lipid for nervous system function. It can also desaturate (11E)-octadecenoate (trans-vaccenoate) at carbon 6 generating (6Z,11E)-octadecadienoate. In addition to Delta-6 activity, this enzyme exhibits Delta-8 activity with slight biases toward n-3 fatty acyl-CoA substrates. In Macaca fascicularis (Crab-eating macaque), this protein is Acyl-CoA 6-desaturase (FADS2).